A 243-amino-acid polypeptide reads, in one-letter code: Probable 6-phosphogluconolactonase (243 aa).

The protein belongs to the glucosamine/galactosamine-6-phosphate isomerase family. 6-phosphogluconolactonase subfamily.

It catalyses the reaction 6-phospho-D-glucono-1,5-lactone + H2O = 6-phospho-D-gluconate + H(+). The protein operates within carbohydrate degradation; pentose phosphate pathway; D-ribulose 5-phosphate from D-glucose 6-phosphate (oxidative stage): step 2/3. In terms of biological role, hydrolysis of 6-phosphogluconolactone to 6-phosphogluconate. This Drosophila melanogaster (Fruit fly) protein is Probable 6-phosphogluconolactonase.